Here is a 495-residue protein sequence, read N- to C-terminus: Cobyric acid synthase (495 aa).

One can recognise a GATase cobBQ-type domain in the interval 262 to 445 (CLEIAVIRLP…LHGLFDNHRW (184 aa)). The Nucleophile role is filled by C340. Residue H437 is part of the active site.

It belongs to the CobB/CobQ family. CobQ subfamily.

Its pathway is cofactor biosynthesis; adenosylcobalamin biosynthesis. In terms of biological role, catalyzes amidations at positions B, D, E, and G on adenosylcobyrinic A,C-diamide. NH(2) groups are provided by glutamine, and one molecule of ATP is hydrogenolyzed for each amidation. The polypeptide is Cobyric acid synthase (Synechococcus sp. (strain JA-3-3Ab) (Cyanobacteria bacterium Yellowstone A-Prime)).